Consider the following 196-residue polypeptide: ATP-dependent Clp protease proteolytic subunit (196 aa).

The Nucleophile role is filled by Ser-96. His-121 is a catalytic residue.

This sequence belongs to the peptidase S14 family. As to quaternary structure, fourteen ClpP subunits assemble into 2 heptameric rings which stack back to back to give a disk-like structure with a central cavity, resembling the structure of eukaryotic proteasomes.

It is found in the cytoplasm. It catalyses the reaction Hydrolysis of proteins to small peptides in the presence of ATP and magnesium. alpha-casein is the usual test substrate. In the absence of ATP, only oligopeptides shorter than five residues are hydrolyzed (such as succinyl-Leu-Tyr-|-NHMec, and Leu-Tyr-Leu-|-Tyr-Trp, in which cleavage of the -Tyr-|-Leu- and -Tyr-|-Trp bonds also occurs).. Its function is as follows. Cleaves peptides in various proteins in a process that requires ATP hydrolysis. Has a chymotrypsin-like activity. Plays a major role in the degradation of misfolded proteins. The protein is ATP-dependent Clp protease proteolytic subunit of Streptococcus sanguinis (strain SK36).